Here is a 352-residue protein sequence, read N- to C-terminus: Lipoyl synthase (352 aa).

A disordered region spans residues 1-21; that stretch reads MTSVDTPTPHGGTPAPAPATA. Positions 71, 76, 82, 97, 101, 104, and 308 each coordinate [4Fe-4S] cluster. One can recognise a Radical SAM core domain in the interval 83–297; it reads WEDREATFLI…SRVAEEIGFA (215 aa).

Belongs to the radical SAM superfamily. Lipoyl synthase family. [4Fe-4S] cluster is required as a cofactor.

It localises to the cytoplasm. The enzyme catalyses [[Fe-S] cluster scaffold protein carrying a second [4Fe-4S](2+) cluster] + N(6)-octanoyl-L-lysyl-[protein] + 2 oxidized [2Fe-2S]-[ferredoxin] + 2 S-adenosyl-L-methionine + 4 H(+) = [[Fe-S] cluster scaffold protein] + N(6)-[(R)-dihydrolipoyl]-L-lysyl-[protein] + 4 Fe(3+) + 2 hydrogen sulfide + 2 5'-deoxyadenosine + 2 L-methionine + 2 reduced [2Fe-2S]-[ferredoxin]. It participates in protein modification; protein lipoylation via endogenous pathway; protein N(6)-(lipoyl)lysine from octanoyl-[acyl-carrier-protein]: step 2/2. Its function is as follows. Catalyzes the radical-mediated insertion of two sulfur atoms into the C-6 and C-8 positions of the octanoyl moiety bound to the lipoyl domains of lipoate-dependent enzymes, thereby converting the octanoylated domains into lipoylated derivatives. In Nocardia farcinica (strain IFM 10152), this protein is Lipoyl synthase.